The following is a 206-amino-acid chain: Probable thymidylate kinase (206 aa).

7–14 (GIDGSGKS) lines the ATP pocket.

The protein belongs to the thymidylate kinase family.

The enzyme catalyses dTMP + ATP = dTDP + ADP. This Methanospirillum hungatei JF-1 (strain ATCC 27890 / DSM 864 / NBRC 100397 / JF-1) protein is Probable thymidylate kinase.